Here is a 414-residue protein sequence, read N- to C-terminus: Ornithine aminotransferase (414 aa).

Cys-154 and Cys-163 form a disulfide bridge. Lys-262 is modified (N6-(pyridoxal phosphate)lysine).

Belongs to the class-III pyridoxal-phosphate-dependent aminotransferase family. As to quaternary structure, homodimer. Pyridoxal 5'-phosphate serves as cofactor. In terms of processing, the disulfide bond between Cys-154 and Cys-163 is reduced by TRX1 which increases OAT catalytic activity.

It is found in the cytoplasm. It carries out the reaction a 2-oxocarboxylate + L-ornithine = L-glutamate 5-semialdehyde + an L-alpha-amino acid. The catalysed reaction is L-ornithine + 2-oxoglutarate = L-glutamate 5-semialdehyde + L-glutamate. It functions in the pathway amino-acid biosynthesis; L-proline biosynthesis; L-glutamate 5-semialdehyde from L-ornithine: step 1/1. With respect to regulation, unlike for mammalian OATs, activity is increased by TRX1-mediated reduction of the disulfide bond between Cys-154 and Cys-163. Binding to TRX1 may also induce conformational changes that facilitate substrate binding. Functionally, catalyzes the transamination of alpha-ketoglutarate with ornithine or N-acetylornithine and of glutamate-5-semialdehyde with glutamate and alanine. The chain is Ornithine aminotransferase from Plasmodium yoelii yoelii.